The sequence spans 105 residues: ATP synthase subunit c (105 aa).

3 consecutive transmembrane segments (helical) span residues 3-23, 32-52, and 78-98; these read FLSL…GGMG, SILG…IGMG, and VAMA…IIAI.

The protein belongs to the ATPase C chain family. As to quaternary structure, F-type ATPases have 2 components, F(1) - the catalytic core - and F(0) - the membrane proton channel. F(1) has five subunits: alpha(3), beta(3), gamma(1), delta(1), epsilon(1). F(0) has three main subunits: a(1), b(2) and c(10-14). The alpha and beta chains form an alternating ring which encloses part of the gamma chain. F(1) is attached to F(0) by a central stalk formed by the gamma and epsilon chains, while a peripheral stalk is formed by the delta and b chains.

It localises to the cell inner membrane. F(1)F(0) ATP synthase produces ATP from ADP in the presence of a proton or sodium gradient. F-type ATPases consist of two structural domains, F(1) containing the extramembraneous catalytic core and F(0) containing the membrane proton channel, linked together by a central stalk and a peripheral stalk. During catalysis, ATP synthesis in the catalytic domain of F(1) is coupled via a rotary mechanism of the central stalk subunits to proton translocation. Functionally, key component of the F(0) channel; it plays a direct role in translocation across the membrane. A homomeric c-ring of between 10-14 subunits forms the central stalk rotor element with the F(1) delta and epsilon subunits. In Helicobacter pylori (strain Shi470), this protein is ATP synthase subunit c.